A 168-amino-acid polypeptide reads, in one-letter code: Plastocyanin, chloroplastic (168 aa).

In terms of domain architecture, Plastocyanin-like spans 70 to 168 (VEVLLGGGDG…AGMVGKVTVN (99 aa)). His-106, Cys-153, His-156, and Met-161 together coordinate Cu cation.

It belongs to the plastocyanin family. Cu(2+) serves as cofactor.

The protein localises to the plastid. It localises to the chloroplast thylakoid membrane. Its function is as follows. Participates in electron transfer between P700 and the cytochrome b6-f complex in photosystem I. This is Plastocyanin, chloroplastic (PETE) from Spinacia oleracea (Spinach).